The primary structure comprises 250 residues: Ubiquinone/menaquinone biosynthesis C-methyltransferase UbiE (250 aa).

Residues threonine 74, aspartate 94, 122–123 (DA), and serine 139 each bind S-adenosyl-L-methionine.

It belongs to the class I-like SAM-binding methyltransferase superfamily. MenG/UbiE family.

The enzyme catalyses a 2-demethylmenaquinol + S-adenosyl-L-methionine = a menaquinol + S-adenosyl-L-homocysteine + H(+). It carries out the reaction a 2-methoxy-6-(all-trans-polyprenyl)benzene-1,4-diol + S-adenosyl-L-methionine = a 5-methoxy-2-methyl-3-(all-trans-polyprenyl)benzene-1,4-diol + S-adenosyl-L-homocysteine + H(+). It functions in the pathway quinol/quinone metabolism; menaquinone biosynthesis; menaquinol from 1,4-dihydroxy-2-naphthoate: step 2/2. The protein operates within cofactor biosynthesis; ubiquinone biosynthesis. Its function is as follows. Methyltransferase required for the conversion of demethylmenaquinol (DMKH2) to menaquinol (MKH2) and the conversion of 2-polyprenyl-6-methoxy-1,4-benzoquinol (DDMQH2) to 2-polyprenyl-3-methyl-6-methoxy-1,4-benzoquinol (DMQH2). The polypeptide is Ubiquinone/menaquinone biosynthesis C-methyltransferase UbiE (Ruegeria sp. (strain TM1040) (Silicibacter sp.)).